A 52-amino-acid polypeptide reads, in one-letter code: uncharacterized protein (52 aa).

Residues 21–40 (VAMNSYVELLFLSVPLIHIF) form a helical membrane-spanning segment.

It localises to the cell membrane. This is an uncharacterized protein from Bacillus subtilis (strain 168).